Reading from the N-terminus, the 562-residue chain is Dihydroxy-acid dehydratase 2 (562 aa).

A [2Fe-2S] cluster-binding site is contributed by Cys-50. Asp-82 serves as a coordination point for Mg(2+). Cys-123 contributes to the [2Fe-2S] cluster binding site. Asp-124, Lys-125, and Glu-447 together coordinate Mg(2+). An N6-carboxylysine modification is found at Lys-125. The active-site Proton acceptor is Ser-473.

The protein belongs to the IlvD/Edd family. Homodimer. It depends on [2Fe-2S] cluster as a cofactor. Requires Mg(2+) as cofactor.

The enzyme catalyses (2R)-2,3-dihydroxy-3-methylbutanoate = 3-methyl-2-oxobutanoate + H2O. It carries out the reaction (2R,3R)-2,3-dihydroxy-3-methylpentanoate = (S)-3-methyl-2-oxopentanoate + H2O. The protein operates within amino-acid biosynthesis; L-isoleucine biosynthesis; L-isoleucine from 2-oxobutanoate: step 3/4. Its pathway is amino-acid biosynthesis; L-valine biosynthesis; L-valine from pyruvate: step 3/4. Functionally, functions in the biosynthesis of branched-chain amino acids. Catalyzes the dehydration of (2R,3R)-2,3-dihydroxy-3-methylpentanoate (2,3-dihydroxy-3-methylvalerate) into 2-oxo-3-methylpentanoate (2-oxo-3-methylvalerate) and of (2R)-2,3-dihydroxy-3-methylbutanoate (2,3-dihydroxyisovalerate) into 2-oxo-3-methylbutanoate (2-oxoisovalerate), the penultimate precursor to L-isoleucine and L-valine, respectively. This Bordetella pertussis (strain Tohama I / ATCC BAA-589 / NCTC 13251) protein is Dihydroxy-acid dehydratase 2.